A 577-amino-acid polypeptide reads, in one-letter code: Arginine--tRNA ligase (577 aa).

The 'HIGH' region motif lies at 122-132 (PNVAKEMHVGH).

This sequence belongs to the class-I aminoacyl-tRNA synthetase family. As to quaternary structure, monomer.

The protein resides in the cytoplasm. The catalysed reaction is tRNA(Arg) + L-arginine + ATP = L-arginyl-tRNA(Arg) + AMP + diphosphate. The polypeptide is Arginine--tRNA ligase (Histophilus somni (strain 2336) (Haemophilus somnus)).